The chain runs to 288 residues: NAD kinase (288 aa).

The Proton acceptor role is filled by Asp73. Residues 73–74, Arg78, 144–145, Asp174, 185–190, and Ala209 contribute to the NAD(+) site; these read DG, NE, and TAYSLS.

This sequence belongs to the NAD kinase family. Requires a divalent metal cation as cofactor.

It is found in the cytoplasm. It carries out the reaction NAD(+) + ATP = ADP + NADP(+) + H(+). Its function is as follows. Involved in the regulation of the intracellular balance of NAD and NADP, and is a key enzyme in the biosynthesis of NADP. Catalyzes specifically the phosphorylation on 2'-hydroxyl of the adenosine moiety of NAD to yield NADP. This is NAD kinase from Porphyromonas gingivalis (strain ATCC 33277 / DSM 20709 / CIP 103683 / JCM 12257 / NCTC 11834 / 2561).